The sequence spans 234 residues: Triggering receptor expressed on myeloid cells 1 (234 aa).

The first 20 residues, 1–20 (MRKTRLWGLLWMLFVSELRA), serve as a signal peptide directing secretion. At 21-205 (ATKLTEEKYE…TDIIRVPVFN (185 aa)) the chain is on the extracellular side. Residues 26–134 (EEKYELKEGQ…LFDRIRLVVT (109 aa)) form the Ig-like V-type domain. A disulfide bridge links cysteine 41 with cysteine 113. Residues asparagine 146, asparagine 191, and asparagine 194 are each glycosylated (N-linked (GlcNAc...) asparagine). A helical membrane pass occupies residues 206–226 (IVILLAGGFLSKSLVFSVLFA). Topologically, residues 227–234 (VTLRSFVP) are cytoplasmic.

Monomer. Homomultimer; when activated. Interacts with TYROBP/DAP12. Interacts with TLR4. Glycosylated. As to expression, mostly expressed by immune cells of the myeloid lineage, such as monocytes, macrophages, neutrophils and dendritic cells. Expression is associated with a mature stage of myeloid development. Highly expressed in adult liver, lung and spleen than in corresponding fetal tissue. Also expressed in the lymph node, placenta, spinal cord and heart tissues. Isoform 2 was detected in the lung, liver and mature monocytes.

It localises to the cell membrane. Its subcellular location is the secreted. In terms of biological role, cell surface receptor that plays important roles in innate and adaptive immunity by amplifying inflammatory responses. Upon activation by various ligands such as PGLYRP1, HMGB1 or HSP70, multimerizes and forms a complex with transmembrane adapter TYROBP/DAP12. In turn, initiates a SYK-mediated cascade of tyrosine phosphorylation, activating multiple downstream mediators such as BTK, MAPK1, MAPK3 or phospholipase C-gamma. This cascade promotes the neutrophil- and macrophage-mediated release of pro-inflammatory cytokines and/or chemokines, as well as their migration and thereby amplifies inflammatory responses that are triggered by bacterial and fungal infections. By also promoting the amplification of inflammatory signals that are initially triggered by Toll-like receptor (TLR) and NOD-like receptor engagement, plays a major role in the pathophysiology of acute and chronic inflammatory diseases of different etiologies including septic shock and atherosclerosis. Acts as a decoy receptor, counterbalancing TREM1 pro-inflammatory activity through the neutralization of its ligand. The protein is Triggering receptor expressed on myeloid cells 1 (TREM1) of Homo sapiens (Human).